The chain runs to 79 residues: Acyl carrier protein (79 aa).

Residues 2–77 form the Carrier domain; it reads SDIEARVKKI…LAIDYAKSHA (76 aa). Residue S37 is modified to O-(pantetheine 4'-phosphoryl)serine.

This sequence belongs to the acyl carrier protein (ACP) family. Post-translationally, 4'-phosphopantetheine is transferred from CoA to a specific serine of apo-ACP by AcpS. This modification is essential for activity because fatty acids are bound in thioester linkage to the sulfhydryl of the prosthetic group.

The protein localises to the cytoplasm. The protein operates within lipid metabolism; fatty acid biosynthesis. Carrier of the growing fatty acid chain in fatty acid biosynthesis. The polypeptide is Acyl carrier protein (Methylibium petroleiphilum (strain ATCC BAA-1232 / LMG 22953 / PM1)).